The sequence spans 285 residues: Ribosomal RNA small subunit methyltransferase I (285 aa).

This sequence belongs to the methyltransferase superfamily. RsmI family.

The protein resides in the cytoplasm. The enzyme catalyses cytidine(1402) in 16S rRNA + S-adenosyl-L-methionine = 2'-O-methylcytidine(1402) in 16S rRNA + S-adenosyl-L-homocysteine + H(+). In terms of biological role, catalyzes the 2'-O-methylation of the ribose of cytidine 1402 (C1402) in 16S rRNA. The polypeptide is Ribosomal RNA small subunit methyltransferase I (Mycobacterium tuberculosis (strain ATCC 25618 / H37Rv)).